The following is a 785-amino-acid chain: Ribosome biogenesis protein BOP1 homolog (785 aa).

Positions 1–11 (MTKKLTIKRKV) are enriched in basic residues. A disordered region spans residues 1-160 (MTKKLTIKRK…DSDTSDEEDI (160 aa)). Composition is skewed to acidic residues over residues 45–54 (EDSTDDEGID), 61–73 (SSED…DEEG), and 85–102 (SGDD…EDDA). Over residues 103–112 (DAKKSSKNND) the composition is skewed to basic and acidic residues. Acidic residues predominate over residues 150 to 159 (ADSDTSDEED). 7 WD repeats span residues 446–487 (GHTD…RTIE), 489–527 (EDVV…KLLV), 571–613 (THFK…SQIP), 616–654 (KSKG…LIKK), 657–696 (TNSK…KPYQ), 700–739 (LHRN…DLLQ), and 755–785 (REEF…RLFT).

It belongs to the WD repeat BOP1/ERB1 family.

The protein localises to the nucleus. Its subcellular location is the nucleolus. The protein resides in the nucleoplasm. Its function is as follows. Required for maturation of ribosomal RNAs and formation of the large ribosomal subunit. This is Ribosome biogenesis protein BOP1 homolog from Drosophila persimilis (Fruit fly).